The chain runs to 209 residues: MIGRIRGMLIEKSPGQALVECSGLGYEIDIPYTTFFHLPETGQEVTLHTHFAVREDAQSLYGFASRLDRNLFRLLIKVNGVGPKLAVGILSGLDAQQFIRCVEARDANSLVKLPGVGKKTAERLLIEMADRIGQLEGQFVPSQPDVPTGAGAATASQAGPDPREEAEAALIALGYKPQEAAKAISKVAGPDMNSETLIRLALKNMIPAG.

The tract at residues 1–64 (MIGRIRGMLI…EDAQSLYGFA (64 aa)) is domain I. Residues 65–143 (SRLDRNLFRL…QLEGQFVPSQ (79 aa)) are domain II. Positions 144-157 (PDVPTGAGAATASQ) are flexible linker. The segment at 158–209 (AGPDPREEAEAALIALGYKPQEAAKAISKVAGPDMNSETLIRLALKNMIPAG) is domain III.

It belongs to the RuvA family. In terms of assembly, homotetramer. Forms an RuvA(8)-RuvB(12)-Holliday junction (HJ) complex. HJ DNA is sandwiched between 2 RuvA tetramers; dsDNA enters through RuvA and exits via RuvB. An RuvB hexamer assembles on each DNA strand where it exits the tetramer. Each RuvB hexamer is contacted by two RuvA subunits (via domain III) on 2 adjacent RuvB subunits; this complex drives branch migration. In the full resolvosome a probable DNA-RuvA(4)-RuvB(12)-RuvC(2) complex forms which resolves the HJ.

The protein resides in the cytoplasm. In terms of biological role, the RuvA-RuvB-RuvC complex processes Holliday junction (HJ) DNA during genetic recombination and DNA repair, while the RuvA-RuvB complex plays an important role in the rescue of blocked DNA replication forks via replication fork reversal (RFR). RuvA specifically binds to HJ cruciform DNA, conferring on it an open structure. The RuvB hexamer acts as an ATP-dependent pump, pulling dsDNA into and through the RuvAB complex. HJ branch migration allows RuvC to scan DNA until it finds its consensus sequence, where it cleaves and resolves the cruciform DNA. The sequence is that of Holliday junction branch migration complex subunit RuvA from Marinobacter nauticus (strain ATCC 700491 / DSM 11845 / VT8) (Marinobacter aquaeolei).